We begin with the raw amino-acid sequence, 396 residues long: Acetate kinase (396 aa).

Asn8 contributes to the Mg(2+) binding site. Lys15 provides a ligand contact to ATP. Position 89 (Arg89) interacts with substrate. Residue Asp146 is the Proton donor/acceptor of the active site. Residues 206 to 210 (HIGNG), 283 to 285 (DMR), and 331 to 335 (GVGEN) contribute to the ATP site. Mg(2+) is bound at residue Glu383.

The protein belongs to the acetokinase family. As to quaternary structure, homodimer. Mg(2+) serves as cofactor. It depends on Mn(2+) as a cofactor.

It localises to the cytoplasm. The catalysed reaction is acetate + ATP = acetyl phosphate + ADP. It participates in metabolic intermediate biosynthesis; acetyl-CoA biosynthesis; acetyl-CoA from acetate: step 1/2. Functionally, catalyzes the formation of acetyl phosphate from acetate and ATP. Can also catalyze the reverse reaction. The chain is Acetate kinase from Streptococcus pneumoniae (strain Hungary19A-6).